The primary structure comprises 343 residues: Holliday junction branch migration complex subunit RuvB (343 aa).

Positions 1-186 (MTEEFDIRQE…FGINLHLEYY (186 aa)) are large ATPase domain (RuvB-L). Residues Leu25, Arg26, Gly67, Lys70, Thr71, Thr72, 133–135 (EDY), Arg176, Tyr186, and Arg223 contribute to the ATP site. Thr71 lines the Mg(2+) pocket. A small ATPAse domain (RuvB-S) region spans residues 187–257 (DVHTITGIVE…IACYALEALN (71 aa)). A head domain (RuvB-H) region spans residues 260 to 343 (RYGLDNVDHK…PRPHRPSLFD (84 aa)). DNA contacts are provided by Arg315 and Arg320.

It belongs to the RuvB family. Homohexamer. Forms an RuvA(8)-RuvB(12)-Holliday junction (HJ) complex. HJ DNA is sandwiched between 2 RuvA tetramers; dsDNA enters through RuvA and exits via RuvB. An RuvB hexamer assembles on each DNA strand where it exits the tetramer. Each RuvB hexamer is contacted by two RuvA subunits (via domain III) on 2 adjacent RuvB subunits; this complex drives branch migration. In the full resolvosome a probable DNA-RuvA(4)-RuvB(12)-RuvC(2) complex forms which resolves the HJ.

The protein resides in the cytoplasm. It carries out the reaction ATP + H2O = ADP + phosphate + H(+). Functionally, the RuvA-RuvB-RuvC complex processes Holliday junction (HJ) DNA during genetic recombination and DNA repair, while the RuvA-RuvB complex plays an important role in the rescue of blocked DNA replication forks via replication fork reversal (RFR). RuvA specifically binds to HJ cruciform DNA, conferring on it an open structure. The RuvB hexamer acts as an ATP-dependent pump, pulling dsDNA into and through the RuvAB complex. RuvB forms 2 homohexamers on either side of HJ DNA bound by 1 or 2 RuvA tetramers; 4 subunits per hexamer contact DNA at a time. Coordinated motions by a converter formed by DNA-disengaged RuvB subunits stimulates ATP hydrolysis and nucleotide exchange. Immobilization of the converter enables RuvB to convert the ATP-contained energy into a lever motion, pulling 2 nucleotides of DNA out of the RuvA tetramer per ATP hydrolyzed, thus driving DNA branch migration. The RuvB motors rotate together with the DNA substrate, which together with the progressing nucleotide cycle form the mechanistic basis for DNA recombination by continuous HJ branch migration. Branch migration allows RuvC to scan DNA until it finds its consensus sequence, where it cleaves and resolves cruciform DNA. This chain is Holliday junction branch migration complex subunit RuvB, found in Porphyromonas gingivalis (strain ATCC BAA-308 / W83).